A 538-amino-acid polypeptide reads, in one-letter code: BTB/POZ domain-containing protein 6 (538 aa).

Positions 1–17 (MLLPLACLHGRVAQCLT) are cleaved as a signal peptide. Disordered stretches follow at residues 29–53 (PRRGARARGAASTGAEAAPAAPPAK) and 76–115 (AAVGRKAGPRSPPSAPAPAPPPPAPAPPTLGNNHQESPGW). A compositionally biased stretch (low complexity) spans 35–53 (ARGAASTGAEAAPAAPPAK). Pro residues predominate over residues 85–103 (RSPPSAPAPAPPPPAPAPP). Residues 136-206 (ADVHFVVGPP…MYSDEIDLEA (71 aa)) enclose the BTB domain.

In terms of tissue distribution, expressed in lens.

It localises to the cytoplasm. Adapter protein for the cul3 E3 ubiquitin-protein ligase complex. Involved in late neuronal development and muscle formation. The chain is BTB/POZ domain-containing protein 6 from Homo sapiens (Human).